We begin with the raw amino-acid sequence, 258 residues long: Small ribosomal subunit protein uS2 (258 aa).

This sequence belongs to the universal ribosomal protein uS2 family.

This chain is Small ribosomal subunit protein uS2, found in Streptococcus suis (strain 05ZYH33).